Consider the following 601-residue polypeptide: Testis-specific gene 10 protein (601 aa).

Basic residues predominate over residues 1–10 (MMRSRSKSPR). 2 disordered regions span residues 1–20 (MMRS…RGAN) and 563–588 (VSST…DRGL). Residues 459-592 (QMTNERISMQ…SPDRGLDRSL (134 aa)) are interaction with HIF1A. Positions 563–573 (VSSTMKPNTKC) are enriched in polar residues. Basic and acidic residues predominate over residues 574-588 (HSPERAHHRSPDRGL). Serine 591 carries the phosphoserine modification.

Belongs to the CEP135/TSGA10 family. Interacts with HIF1A. Post-translationally, processed into N-terminal 27-kDa and C-terminal 55-kDa fragments.

Its subcellular location is the cytoplasm. It localises to the cytoskeleton. The protein resides in the microtubule organizing center. The protein localises to the centrosome. It is found in the centriole. Functionally, plays a role in spermatogenesis. When overexpressed, prevents nuclear localization of HIF1A. The chain is Testis-specific gene 10 protein (TSGA10) from Macaca fascicularis (Crab-eating macaque).